The following is a 73-amino-acid chain: Large ribosomal subunit protein bL31 (73 aa).

Belongs to the bacterial ribosomal protein bL31 family. Type A subfamily. In terms of assembly, part of the 50S ribosomal subunit.

Its function is as follows. Binds the 23S rRNA. The protein is Large ribosomal subunit protein bL31 of Bartonella henselae (strain ATCC 49882 / DSM 28221 / CCUG 30454 / Houston 1) (Rochalimaea henselae).